Reading from the N-terminus, the 714-residue chain is Fatty acid oxidation complex subunit alpha (714 aa).

Residues methionine 1 to proline 190 form an enoyl-CoA hydratase region. Residues alanine 306–glutamine 714 are 3-hydroxyacyl-CoA dehydrogenase.

The protein in the N-terminal section; belongs to the enoyl-CoA hydratase/isomerase family. In the central section; belongs to the 3-hydroxyacyl-CoA dehydrogenase family. As to quaternary structure, heterotetramer of two alpha chains (FadJ) and two beta chains (FadI).

It is found in the cytoplasm. It carries out the reaction a (3S)-3-hydroxyacyl-CoA = a (2E)-enoyl-CoA + H2O. It catalyses the reaction a 4-saturated-(3S)-3-hydroxyacyl-CoA = a (3E)-enoyl-CoA + H2O. The catalysed reaction is a (3S)-3-hydroxyacyl-CoA + NAD(+) = a 3-oxoacyl-CoA + NADH + H(+). The enzyme catalyses (3S)-3-hydroxybutanoyl-CoA = (3R)-3-hydroxybutanoyl-CoA. The protein operates within lipid metabolism; fatty acid beta-oxidation. Functionally, catalyzes the formation of a hydroxyacyl-CoA by addition of water on enoyl-CoA. Also exhibits 3-hydroxyacyl-CoA epimerase and 3-hydroxyacyl-CoA dehydrogenase activities. The polypeptide is Fatty acid oxidation complex subunit alpha (Escherichia coli (strain ATCC 8739 / DSM 1576 / NBRC 3972 / NCIMB 8545 / WDCM 00012 / Crooks)).